The sequence spans 524 residues: Bifunctional purine biosynthesis protein PurH (524 aa).

The region spanning 1–144 is the MGS-like domain; it reads MTRRALVSVS…KNSAHVGVVV (144 aa).

This sequence belongs to the PurH family.

The catalysed reaction is (6R)-10-formyltetrahydrofolate + 5-amino-1-(5-phospho-beta-D-ribosyl)imidazole-4-carboxamide = 5-formamido-1-(5-phospho-D-ribosyl)imidazole-4-carboxamide + (6S)-5,6,7,8-tetrahydrofolate. The enzyme catalyses IMP + H2O = 5-formamido-1-(5-phospho-D-ribosyl)imidazole-4-carboxamide. It functions in the pathway purine metabolism; IMP biosynthesis via de novo pathway; 5-formamido-1-(5-phospho-D-ribosyl)imidazole-4-carboxamide from 5-amino-1-(5-phospho-D-ribosyl)imidazole-4-carboxamide (10-formyl THF route): step 1/1. The protein operates within purine metabolism; IMP biosynthesis via de novo pathway; IMP from 5-formamido-1-(5-phospho-D-ribosyl)imidazole-4-carboxamide: step 1/1. This Anaeromyxobacter dehalogenans (strain 2CP-C) protein is Bifunctional purine biosynthesis protein PurH.